The chain runs to 669 residues: Probable potassium transport system protein Kup (669 aa).

12 helical membrane passes run Val-47 to Leu-67, Val-86 to Met-106, Thr-144 to Ile-164, Gly-172 to Met-192, Ile-206 to Ile-226, Gly-252 to Leu-272, Trp-288 to Leu-308, Ala-326 to Ile-346, Ile-378 to Phe-398, Leu-404 to Phe-424, Leu-435 to Ala-455, and Ile-460 to Thr-480.

It belongs to the HAK/KUP transporter (TC 2.A.72) family.

It is found in the cell inner membrane. It carries out the reaction K(+)(in) + H(+)(in) = K(+)(out) + H(+)(out). Functionally, transport of potassium into the cell. Likely operates as a K(+):H(+) symporter. The protein is Probable potassium transport system protein Kup of Bdellovibrio bacteriovorus (strain ATCC 15356 / DSM 50701 / NCIMB 9529 / HD100).